The primary structure comprises 281 residues: UDP-N-acetylenolpyruvoylglucosamine reductase (281 aa).

Positions 17–180 (VGGKAKKLII…LSATFKFDNG (164 aa)) constitute an FAD-binding PCMH-type domain. Residue Arg-159 is part of the active site. Ser-206 functions as the Proton donor in the catalytic mechanism. The active site involves Glu-276.

The protein belongs to the MurB family. FAD serves as cofactor.

The protein localises to the cytoplasm. The enzyme catalyses UDP-N-acetyl-alpha-D-muramate + NADP(+) = UDP-N-acetyl-3-O-(1-carboxyvinyl)-alpha-D-glucosamine + NADPH + H(+). The protein operates within cell wall biogenesis; peptidoglycan biosynthesis. Cell wall formation. This chain is UDP-N-acetylenolpyruvoylglucosamine reductase, found in Fusobacterium nucleatum subsp. nucleatum (strain ATCC 25586 / DSM 15643 / BCRC 10681 / CIP 101130 / JCM 8532 / KCTC 2640 / LMG 13131 / VPI 4355).